The chain runs to 361 residues: Homeobox protein knotted-1-like 6 (361 aa).

The segment at 11–48 (VGASGVHGGHQHQHHHHPWGSSLSAIVAPPPPPQLQQQ) is disordered. Over residues 19 to 28 (GHQHQHHHHP) the composition is skewed to basic residues. In terms of domain architecture, ELK spans 242 to 262 (ELKHHLLKKYSGYLSSLKQEL). Residues 263-326 (SKKKKKGKLP…NQRKRHWKPS (64 aa)) constitute a DNA-binding region (homeobox; TALE-type).

This sequence belongs to the TALE/KNOX homeobox family. As to quaternary structure, interacts with FTIP7. Expressed predominantly in shoot apices. Also found to a lesser extent in glumes.

The protein localises to the nucleus. The protein resides in the cytoplasm. Functionally, transcription factor that regulates genes involved in development. May be involved in shoot formation during embryogenesis. Overexpression in transgenic plants causes altered leaf morphology. Regulates anther dehiscence via direct repression of the auxin biosynthetic gene YUCCA4. Binds to the DNA sequence 5'-TGAC-3' in the promoter of the YUCCA4 gene and represses its activity during anther development. Reduction of auxin levels at late stage of anther development, after meiosis of microspore mother cells, is necessary for normal anther dehiscence and seed setting. This is Homeobox protein knotted-1-like 6 (OSH1) from Oryza sativa subsp. japonica (Rice).